Consider the following 648-residue polypeptide: L-aspartate oxidase 2-b, chloroplastic (648 aa).

Residues Ser-98–Ala-101, Lys-120, Ser-127–Gly-134, and Asp-298 each bind FAD. The active-site Proton donor/acceptor is the Arg-373. Residues Glu-458 and Ser-474 to Leu-475 each bind FAD.

Belongs to the FAD-dependent oxidoreductase 2 family. NadB subfamily. FAD is required as a cofactor.

The protein localises to the plastid. It is found in the chloroplast. The catalysed reaction is L-aspartate + O2 = iminosuccinate + H2O2. Its pathway is alkaloid biosynthesis; nicotine biosynthesis. The protein operates within cofactor biosynthesis; NAD(+) biosynthesis; iminoaspartate from L-aspartate (oxidase route): step 1/1. Its function is as follows. Involved in the biosynthesis of pyridine alkaloid natural products, leading mainly to the production of anabasine, anatabine, nicotine and nornicotine, effective deterrents against herbivores with antiparasitic and pesticide properties (neurotoxins); nornicotine serves as the precursor in the synthesis of the carcinogen compound N'-nitrosonornicotine (NNN). Catalyzes the oxidation of L-aspartate to iminoaspartate. The sequence is that of L-aspartate oxidase 2-b, chloroplastic from Nicotiana tabacum (Common tobacco).